The chain runs to 739 residues: Cleavage and polyadenylation specificity factor subunit 2 (739 aa).

Residues 411 to 423 show a composition bias toward basic and acidic residues; sequence VKEEETKASHGSD. Residues 411 to 430 are disordered; it reads VKEEETKASHGSDDNSSEPM.

It belongs to the metallo-beta-lactamase superfamily. RNA-metabolizing metallo-beta-lactamase-like family. CPSF2/YSH1 subfamily. As to quaternary structure, component of the CPSF complex, at least composed of CPSF160, CPSF100, CPSF73-I, CPSF73-II, CPSF30, FY and FIPS5. Forms a complex with cleavage and polyadenylation specificity factor (CPSF) subunits FY, PAPS2, CSTF50, CPSF30, CPSF73-I, CPSF73-II and CPSF160.

It localises to the nucleus. It is found in the cytoplasm. In terms of biological role, CPSF plays a key role in pre-mRNA 3'-end formation, recognizing the AAUAAA signal sequence and interacting with poly(A)polymerase and other factors to bring about cleavage and poly(A) addition. Required for antisense-RNA-mediated gene silencing. The chain is Cleavage and polyadenylation specificity factor subunit 2 (CPSF100) from Arabidopsis thaliana (Mouse-ear cress).